Reading from the N-terminus, the 393-residue chain is Probable acetyl-CoA acyltransferase (393 aa).

The Acyl-thioester intermediate role is filled by Cys88. Active-site proton acceptor residues include His349 and Cys378.

Belongs to the thiolase-like superfamily. Thiolase family.

It is found in the cytoplasm. It catalyses the reaction 2 acetyl-CoA = acetoacetyl-CoA + CoA. In Staphylococcus aureus (strain bovine RF122 / ET3-1), this protein is Probable acetyl-CoA acyltransferase.